We begin with the raw amino-acid sequence, 292 residues long: Hypoxia responsive morphology factor A (292 aa).

The Bipartite nuclear localization signal motif lies at 48–70 (RRNGRRRNLEYVAQHRRKIARKI). The tract at residues 156–186 (GKEHYSLHLSTLPAIRNAFGDVIFDAIERSP) is RNA recognition motif (RRM)-like domain.

This sequence belongs to the hrmA family.

It localises to the nucleus. In terms of biological role, hypoxia responsive morphology factor that modulates the expression of the subtelomeric hrmA-associated cluster (HAC) containing genes that alter the hyphal surface (such as reduced total chitin or increased beta-glucan exposure) and perturb inter-hyphal interactions within the developing biofilms, resulting in a loss of vertically aligned polarized growing filaments. Consequently, this hypoxia-typic morphotype (called H-MORPH) with altered biofilm architecture leads to increased hypoxia fitness, increased host inflammation, rapid disease progression, and mortality in a murine model of invasive aspergillosis. This Aspergillus fumigatus (strain CBS 144.89 / FGSC A1163 / CEA10) (Neosartorya fumigata) protein is Hypoxia responsive morphology factor A.